A 258-amino-acid chain; its full sequence is UPF0758 protein Bamb_2548 (258 aa).

Residues 1–43 (MLSPCLAAPATECRDPADAPAAPARHTGPARPRKRRPRNWKPH) form a disordered region. Residues 31 to 43 (RPRKRRPRNWKPH) are compositionally biased toward basic residues. Residues 136–258 (QIDSPGAVED…TFSFARAGWL (123 aa)) enclose the MPN domain. Residues His-207, His-209, and Asp-220 each contribute to the Zn(2+) site. The JAMM motif signature appears at 207-220 (HNHPSGAVQPSAED).

Belongs to the UPF0758 family.

The sequence is that of UPF0758 protein Bamb_2548 from Burkholderia ambifaria (strain ATCC BAA-244 / DSM 16087 / CCUG 44356 / LMG 19182 / AMMD) (Burkholderia cepacia (strain AMMD)).